A 317-amino-acid chain; its full sequence is Ret finger protein-like 3 (317 aa).

An RING-type zinc finger spans residues 40-82 (CPVCSDYLEKPMSLECGCTVCLKCINSLQKEPHGEDLLCCCCS). Residues 107–301 (EPKLKKILQM…DQGVLSICPL (195 aa)) enclose the B30.2/SPRY domain.

As to expression, expressed during neurogenesis in differentiating human embryonic stem cells and in the developing human neocortex.

The protein localises to the cytoplasm. The protein resides in the nucleus. Functionally, (Microbial infection) Stimulates the activity of Human Immunodeficiency Virus 1/HIV-1 pre-integration complex. The polypeptide is Ret finger protein-like 3 (RFPL3) (Homo sapiens (Human)).